Consider the following 467-residue polypeptide: uncharacterized protein (467 aa).

Positions 1–60 (MVRVSRGCQSCVDAKLQSTPSPSPSKSPSPTESPEQCLQKRQSGEQVVLPSRPFPRTSPR) are disordered.

In terms of biological role, involved in osmoadaptation. This is an uncharacterized protein from Emericella nidulans (strain FGSC A4 / ATCC 38163 / CBS 112.46 / NRRL 194 / M139) (Aspergillus nidulans).